A 300-amino-acid chain; its full sequence is Porphobilinogen deaminase (300 aa).

Residue cysteine 239 is modified to S-(dipyrrolylmethanemethyl)cysteine.

The protein belongs to the HMBS family. As to quaternary structure, monomer. Dipyrromethane serves as cofactor.

The catalysed reaction is 4 porphobilinogen + H2O = hydroxymethylbilane + 4 NH4(+). It participates in porphyrin-containing compound metabolism; protoporphyrin-IX biosynthesis; coproporphyrinogen-III from 5-aminolevulinate: step 2/4. Tetrapolymerization of the monopyrrole PBG into the hydroxymethylbilane pre-uroporphyrinogen in several discrete steps. This is Porphobilinogen deaminase from Francisella tularensis subsp. holarctica (strain FTNF002-00 / FTA).